The sequence spans 131 residues: Small ribosomal subunit protein uS11 (131 aa).

Belongs to the universal ribosomal protein uS11 family. In terms of assembly, part of the 30S ribosomal subunit. Interacts with proteins S7 and S18. Binds to IF-3.

Functionally, located on the platform of the 30S subunit, it bridges several disparate RNA helices of the 16S rRNA. Forms part of the Shine-Dalgarno cleft in the 70S ribosome. The polypeptide is Small ribosomal subunit protein uS11 (Helicobacter pylori (strain Shi470)).